Here is a 477-residue protein sequence, read N- to C-terminus: Methionine aminopeptidase 2 (477 aa).

A disordered region spans residues 1 to 121 (MAGVEEAASC…TDPPSVPICD (121 aa)). A2 carries the N-acetylalanine modification. Residues 36-46 (KKKKRKKKKSK) are compositionally biased toward basic residues. S45 carries the phosphoserine modification. Positions 54 to 78 (EPDKEAGASVDEVTRQLERQALEEK) are enriched in basic and acidic residues. S62 bears the Phosphoserine; alternate mark. S62 carries O-linked (GlcNAc) serine; alternate glycosylation. Acidic residues predominate over residues 79–91 (EKDDDDEDGDGDG). Residues 96 to 108 (GKKKKKKKKKRGP) show a composition bias toward basic residues. H230 is a substrate binding site. Residues D250, D261, and H330 each contribute to the a divalent metal cation site. Residue H338 coordinates substrate. A divalent metal cation-binding residues include E363 and E458.

Belongs to the peptidase M24A family. Methionine aminopeptidase eukaryotic type 2 subfamily. As to quaternary structure, binds EIF2S1 at low magnesium concentrations. Interacts strongly with the eIF-2 gamma-subunit EIF2S3. Co(2+) serves as cofactor. Requires Zn(2+) as cofactor. It depends on Mn(2+) as a cofactor. The cofactor is Fe(2+). Contains approximately 12 O-linked N-acetylglucosamine (GlcNAc) residues. O-glycosylation is required for EIF2S1 binding.

It localises to the cytoplasm. The catalysed reaction is Release of N-terminal amino acids, preferentially methionine, from peptides and arylamides.. Cotranslationally removes the N-terminal methionine from nascent proteins. The N-terminal methionine is often cleaved when the second residue in the primary sequence is small and uncharged (Met-Ala-, Cys, Gly, Pro, Ser, Thr, or Val). In terms of biological role, protects eukaryotic initiation factor EIF2S1 from translation-inhibiting phosphorylation by inhibitory kinases such as EIF2AK2/PKR and EIF2AK1/HCR. Plays a critical role in the regulation of protein synthesis. This is Methionine aminopeptidase 2 from Bos taurus (Bovine).